The chain runs to 119 residues: Beta-2-microglobulin (119 aa).

Positions 1–20 are cleaved as a signal peptide; sequence MARLVVVALLVLLCLSGLEA. Positions 25–114 constitute an Ig-like C1-type domain; sequence PKIQVYSRHP…VTFTAPKTVK (90 aa). Cys-45 and Cys-100 are disulfide-bonded.

It belongs to the beta-2-microglobulin family. Heterodimer of an alpha chain and a beta chain. Beta-2-microglobulin is the beta-chain of major histocompatibility complex class I molecules.

Its subcellular location is the secreted. Its function is as follows. Component of the class I major histocompatibility complex (MHC). Involved in the presentation of peptide antigens to the immune system. This chain is Beta-2-microglobulin (B2M), found in Chiropotes satanas (Brown-bearded saki).